Reading from the N-terminus, the 544-residue chain is Fructose dehydrogenase large subunit (544 aa).

14–30 is an FAD binding site; the sequence is GAGICGSLLAHKLVRNG. Histidine 478 functions as the Proton acceptor in the catalytic mechanism.

Belongs to the GMC oxidoreductase family. In terms of assembly, heterotrimer composed of FdhL, FdhS and FdhC. The cofactor is FAD.

The protein resides in the cell membrane. The catalysed reaction is keto-D-fructose + a ubiquinone = 5-dehydro-D-fructose + a ubiquinol. Its function is as follows. Catalytic subunit of fructose dehydrogenase, an enzyme that catalyzes the oxidation of D-fructose to produce 5-keto-D-fructose. The protein is Fructose dehydrogenase large subunit (fdhL) of Gluconobacter japonicus.